The sequence spans 342 residues: Ketol-acid reductoisomerase (NADP(+)) (342 aa).

Positions 2 to 182 constitute a KARI N-terminal Rossmann domain; sequence AELFYDDDAD…GGLRAAGIKT (181 aa). Residues 25–28, arginine 48, serine 51, serine 53, and 83–86 each bind NADP(+); these read YGSQ and DQHQ. Residue histidine 108 is part of the active site. Position 134 (glycine 134) interacts with NADP(+). One can recognise a KARI C-terminal knotted domain in the interval 183 to 328; the sequence is TFTEETETDL…RELRKLFAWV (146 aa). The Mg(2+) site is built by aspartate 191, glutamate 195, glutamate 227, and glutamate 231. Serine 252 lines the substrate pocket.

This sequence belongs to the ketol-acid reductoisomerase family. Requires Mg(2+) as cofactor.

The catalysed reaction is (2R)-2,3-dihydroxy-3-methylbutanoate + NADP(+) = (2S)-2-acetolactate + NADPH + H(+). The enzyme catalyses (2R,3R)-2,3-dihydroxy-3-methylpentanoate + NADP(+) = (S)-2-ethyl-2-hydroxy-3-oxobutanoate + NADPH + H(+). It participates in amino-acid biosynthesis; L-isoleucine biosynthesis; L-isoleucine from 2-oxobutanoate: step 2/4. The protein operates within amino-acid biosynthesis; L-valine biosynthesis; L-valine from pyruvate: step 2/4. In terms of biological role, involved in the biosynthesis of branched-chain amino acids (BCAA). Catalyzes an alkyl-migration followed by a ketol-acid reduction of (S)-2-acetolactate (S2AL) to yield (R)-2,3-dihydroxy-isovalerate. In the isomerase reaction, S2AL is rearranged via a Mg-dependent methyl migration to produce 3-hydroxy-3-methyl-2-ketobutyrate (HMKB). In the reductase reaction, this 2-ketoacid undergoes a metal-dependent reduction by NADPH to yield (R)-2,3-dihydroxy-isovalerate. This Beutenbergia cavernae (strain ATCC BAA-8 / DSM 12333 / CCUG 43141 / JCM 11478 / NBRC 16432 / NCIMB 13614 / HKI 0122) protein is Ketol-acid reductoisomerase (NADP(+)).